Reading from the N-terminus, the 133-residue chain is Large ribosomal subunit protein bL17 (133 aa).

It belongs to the bacterial ribosomal protein bL17 family. Part of the 50S ribosomal subunit. Contacts protein L32.

The chain is Large ribosomal subunit protein bL17 from Ehrlichia chaffeensis (strain ATCC CRL-10679 / Arkansas).